Reading from the N-terminus, the 508-residue chain is Ribose import ATP-binding protein RbsA 2 (508 aa).

ABC transporter domains lie at 6-241 (LTIH…VGRE) and 254-499 (ERSG…SGMG). ATP is bound at residue 38–45 (GENGAGKS).

This sequence belongs to the ABC transporter superfamily. Ribose importer (TC 3.A.1.2.1) family. As to quaternary structure, the complex is composed of an ATP-binding protein (RbsA), two transmembrane proteins (RbsC) and a solute-binding protein (RbsB).

It localises to the cell inner membrane. The enzyme catalyses D-ribose(out) + ATP + H2O = D-ribose(in) + ADP + phosphate + H(+). Functionally, part of the ABC transporter complex RbsABC involved in ribose import. Responsible for energy coupling to the transport system. This is Ribose import ATP-binding protein RbsA 2 from Rhizobium etli (strain ATCC 51251 / DSM 11541 / JCM 21823 / NBRC 15573 / CFN 42).